Reading from the N-terminus, the 232-residue chain is MTVQKMTAQEIIAFIGNAEKKTSVKVTFEGELSAPVPESVLKLGNVLFGDWKAIEPLLVDLKENVDFIVEQDGRNSAVPLLDKRRINARIEPGAIIRDQVVIGDNAVIMMGAIINIGAEIGPGTMIDMGAILGGRATVGKNSHIGAGAVLAGVIEPASAEPVRIGDNVLVGANAVVIEGVQVGNGSVVAAGAIVTEDVPENVVVAGVPARIIKEIDSQTQQKTALEDALRLI.

It belongs to the transferase hexapeptide repeat family. DapH subfamily.

The enzyme catalyses (S)-2,3,4,5-tetrahydrodipicolinate + acetyl-CoA + H2O = L-2-acetamido-6-oxoheptanedioate + CoA. Its pathway is amino-acid biosynthesis; L-lysine biosynthesis via DAP pathway; LL-2,6-diaminopimelate from (S)-tetrahydrodipicolinate (acetylase route): step 1/3. In terms of biological role, catalyzes the transfer of an acetyl group from acetyl-CoA to tetrahydrodipicolinate. The chain is 2,3,4,5-tetrahydropyridine-2,6-dicarboxylate N-acetyltransferase from Streptococcus uberis (strain ATCC BAA-854 / 0140J).